The primary structure comprises 2785 residues: Testis-expressed protein 15 (2785 aa).

The span at 262–274 (SSSFPSSLSNAFS) shows a compositional bias: low complexity. 8 disordered regions span residues 262 to 331 (SSSF…PSSD), 596 to 620 (EQRDDKNPNEAKEHNTDNINGSEKQ), 661 to 683 (NGKPAETASSESEAVEQRHAPND), 904 to 924 (TESTEPETNKEGNASGFGMCS), 943 to 1064 (VQES…QGRI), 2276 to 2458 (NRQE…TNDK), 2470 to 2511 (DIDA…LVPD), and 2571 to 2601 (TQPIKSESPKKSMTDAPNPNTAPFGSYGNSA). Over residues 275–286 (DVRKQKHSEEQV) the composition is skewed to basic and acidic residues. Residues 314–331 (TCSNDSQGHFSQESPSSD) are compositionally biased toward polar residues. The segment covering 596–611 (EQRDDKNPNEAKEHNT) has biased composition (basic and acidic residues). Polar residues-rich tracts occupy residues 962–989 (HNTHVDQGSGKPNNDSLSTEPSNVTVMN) and 1021–1031 (HASSSRGQNIA). Residues 1033 to 1042 (KDLREHETHE) are compositionally biased toward basic and acidic residues. Composition is skewed to polar residues over residues 1049 to 1064 (SHGSSDRFSSLSQGRI), 2291 to 2314 (DSSQPGVSEQTPPGTECTVKNISD), 2327 to 2338 (EVSQGKGNTDTV), 2353 to 2387 (NIQTVSKHPSTTGSPPNDENKIGSNSSDSLKSISA), 2394 to 2415 (RQSSVLGSVSPAESVQDTCTPK), 2431 to 2454 (ASLTEQQENSNVIEKRNGNSSVAE), 2491 to 2502 (DHTQISPSNLTA), and 2585 to 2601 (DAPNPNTAPFGSYGNSA).

Belongs to the TEX15 family. As to quaternary structure, interacts with PIWIL4. Interacts with PIWIL2. Detected in testis and ovary, and at lower levels in lung and brain.

The protein resides in the cytoplasm. It localises to the nucleus. Required during spermatogenesis for normal chromosome synapsis and meiotic recombination in germ cells. Necessary for formation of DMC1 and RAD51 foci on meiotic chromosomes, suggesting a specific role in DNA double-stranded break repair. Essential executor of PIWIL4-piRNA pathway directed transposon DNA methylation and silencing in the male embryonic germ cells. PIWIL4-piRNA binds to nascent transposon transcripts and interacts with TEX15, which may in turn recruit the epigenetic silencing machinery to the transposon loci. Not required for piRNA biosynthesis. The sequence is that of Testis-expressed protein 15 from Mus musculus (Mouse).